A 301-amino-acid polypeptide reads, in one-letter code: Ribosomal RNA small subunit methyltransferase A (301 aa).

S-adenosyl-L-methionine is bound by residues Asn-23, Ile-25, Gly-50, Glu-72, Asp-97, and Asn-149.

The protein belongs to the class I-like SAM-binding methyltransferase superfamily. rRNA adenine N(6)-methyltransferase family. RsmA subfamily.

It is found in the cytoplasm. The enzyme catalyses adenosine(1518)/adenosine(1519) in 16S rRNA + 4 S-adenosyl-L-methionine = N(6)-dimethyladenosine(1518)/N(6)-dimethyladenosine(1519) in 16S rRNA + 4 S-adenosyl-L-homocysteine + 4 H(+). Specifically dimethylates two adjacent adenosines (A1518 and A1519) in the loop of a conserved hairpin near the 3'-end of 16S rRNA in the 30S particle. May play a critical role in biogenesis of 30S subunits. This is Ribosomal RNA small subunit methyltransferase A from Rickettsia peacockii (strain Rustic).